The chain runs to 122 residues: Large ribosomal subunit protein uL14 (122 aa).

This sequence belongs to the universal ribosomal protein uL14 family. As to quaternary structure, part of the 50S ribosomal subunit. Forms a cluster with proteins L3 and L19. In the 70S ribosome, L14 and L19 interact and together make contacts with the 16S rRNA in bridges B5 and B8.

In terms of biological role, binds to 23S rRNA. Forms part of two intersubunit bridges in the 70S ribosome. This is Large ribosomal subunit protein uL14 from Staphylococcus carnosus (strain TM300).